Here is a 987-residue protein sequence, read N- to C-terminus: SNF2 domain-containing protein ENL1 (987 aa).

2 disordered regions span residues 1–172 (MASP…AYGG) and 224–245 (FGDY…ENHA). Composition is skewed to pro residues over residues 18-27 (TPPAPTPLAA) and 51-71 (NPNP…PQEP). Residues 99–110 (DSIRDILDDLTT) show a composition bias toward basic and acidic residues. Residues 141–156 (PSQSQLNDGTKPSSSF) are compositionally biased toward polar residues. The span at 226-237 (DYDDEDDIDQDA) shows a compositional bias: acidic residues. A Helicase ATP-binding domain is found at 292–466 (WVLHCRGTGG…WALFYFCCPE (175 aa)). 305 to 312 (DDMGLGKT) provides a ligand contact to ATP. The short motif at 417–420 (DEGH) is the DEAH box element. The region spanning 645–801 (SLLQNLVSEG…TRYFSKRDIQ (157 aa)) is the Helicase C-terminal domain.

This sequence belongs to the SNF2/RAD54 helicase family. Expressed in ovaries, roots, shoots and leaves.

The protein localises to the cytoplasm. The protein resides in the chromosome. DNA helicase that acts as an essential component of the spindle assembly checkpoint. Plays an indispensable role in the development of seed endosperm. Is required to secure sister chromosome separation during endosperm syncytial mitosis, which involves extremely rapid free nuclear cycles. This chain is SNF2 domain-containing protein ENL1, found in Oryza sativa subsp. japonica (Rice).